The following is a 330-amino-acid chain: Serine/threonine-protein phosphatase beta isoform (330 aa).

Mn(2+) is bound by residues aspartate 63, histidine 65, aspartate 91, and asparagine 123. Histidine 124 serves as the catalytic Proton donor. Histidine 172 and histidine 247 together coordinate Mn(2+). Residues 308-319 are compositionally biased toward polar residues; the sequence is GMNSSRPTTPQR. Positions 308-330 are disordered; that stretch reads GMNSSRPTTPQRSAPMLATNKKK. Residues threonine 315 and threonine 316 each carry the phosphothreonine modification.

The protein belongs to the PPP phosphatase family. PP-1 subfamily. As to quaternary structure, interacts with Nop17l. Interacts with uri; uri inhibits flw phosphatase activity. Mn(2+) serves as cofactor.

It catalyses the reaction O-phospho-L-seryl-[protein] + H2O = L-seryl-[protein] + phosphate. The catalysed reaction is O-phospho-L-threonyl-[protein] + H2O = L-threonyl-[protein] + phosphate. In terms of biological role, required for cell adhesion in non-muscle tissues and in maintenance of muscle attachment. Vital for larval development. The protein is Serine/threonine-protein phosphatase beta isoform (flw) of Drosophila melanogaster (Fruit fly).